A 95-amino-acid chain; its full sequence is Small ribosomal subunit protein mS37 (95 aa).

The CHCH domain maps to 27–69 (ANKCLVLMSNLLQCWSSYGHMSPKCAGLVTELKSCTSESALGK). 2 consecutive short sequence motifs (cx9C motif) follow at residues 30 to 40 (CLVLMSNLLQC) and 51 to 61 (CAGLVTELKSC). Cystine bridges form between Cys-30–Cys-61 and Cys-40–Cys-51.

Belongs to the mitochondrion-specific ribosomal protein mS37 family. As to quaternary structure, component of the mitochondrial small ribosomal subunit (mt-SSU). Mature yeast 74S mitochondrial ribosomes consist of a small (37S) and a large (54S) subunit. The 37S small subunit contains a 15S ribosomal RNA (15S mt-rRNA) and 34 different proteins. The 54S large subunit contains a 21S rRNA (21S mt-rRNA) and 46 different proteins.

Its subcellular location is the mitochondrion. The protein resides in the mitochondrion matrix. Its function is as follows. Component of the mitochondrial ribosome (mitoribosome), a dedicated translation machinery responsible for the synthesis of mitochondrial genome-encoded proteins, including at least some of the essential transmembrane subunits of the mitochondrial respiratory chain. The mitoribosomes are attached to the mitochondrial inner membrane and translation products are cotranslationally integrated into the membrane. This is Small ribosomal subunit protein mS37 (MRP10) from Saccharomyces cerevisiae (strain ATCC 204508 / S288c) (Baker's yeast).